Reading from the N-terminus, the 365-residue chain is DNA repair protein rhp51 (365 aa).

The segment at 1 to 25 (MADTEVEMQVSAADTNNNENGQAQS) is disordered. Polar residues predominate over residues 12 to 25 (AADTNNNENGQAQS). Position 149–156 (149–156 (GEFRTGKS)) interacts with ATP.

The protein belongs to the RecA family. RAD51 subfamily. In terms of assembly, interacts with rad22, rad54, rdh54, rhp54, rti1, swi2 and swi5. Forms homooiligomers.

Its subcellular location is the nucleus. In terms of biological role, required both for recombination and for the repair of DNA damage caused by X-rays. Binds to single and double-stranded DNA, in the presence of magnesium, and exhibits DNA-dependent ATPase activity. Promotes DNA strand annealing and strand exchange via DNA recombinase activity and forms helical nucleoprotein filaments. The chain is DNA repair protein rhp51 (rhp51) from Schizosaccharomyces pombe (strain 972 / ATCC 24843) (Fission yeast).